Here is a 190-residue protein sequence, read N- to C-terminus: Interferon alpha-9 (190 aa).

The signal sequence occupies residues 1 to 23 (MARPFAFLMVLVVISYWSTCSLG). 2 cysteine pairs are disulfide-bonded: C24-C122 and C52-C162. A glycan (N-linked (GlcNAc...) asparagine) is linked at N101.

The protein belongs to the alpha/beta interferon family.

The protein localises to the secreted. In terms of biological role, produced by macrophages, IFN-alpha have antiviral activities. Interferon stimulates the production of two enzymes: a protein kinase and an oligoadenylate synthetase. The chain is Interferon alpha-9 (Ifna9) from Mus musculus (Mouse).